Reading from the N-terminus, the 426-residue chain is Phosphoribosylamine--glycine ligase (426 aa).

An ATP-grasp domain is found at 113–320; it reads KSLMTEAKIP…LLELLYRAST (208 aa). 139 to 200 serves as a coordination point for ATP; sequence LESKSIPIVI…EEFMEGQEAS (62 aa). The Mg(2+) site is built by glutamate 290 and asparagine 292.

It belongs to the GARS family. Requires Mg(2+) as cofactor. Mn(2+) is required as a cofactor.

It carries out the reaction 5-phospho-beta-D-ribosylamine + glycine + ATP = N(1)-(5-phospho-beta-D-ribosyl)glycinamide + ADP + phosphate + H(+). It functions in the pathway purine metabolism; IMP biosynthesis via de novo pathway; N(1)-(5-phospho-D-ribosyl)glycinamide from 5-phospho-alpha-D-ribose 1-diphosphate: step 2/2. The sequence is that of Phosphoribosylamine--glycine ligase from Leptospira interrogans serogroup Icterohaemorrhagiae serovar Lai (strain 56601).